Consider the following 185-residue polypeptide: Elongation factor P (185 aa).

This sequence belongs to the elongation factor P family.

Its subcellular location is the cytoplasm. The protein operates within protein biosynthesis; polypeptide chain elongation. Functionally, involved in peptide bond synthesis. Stimulates efficient translation and peptide-bond synthesis on native or reconstituted 70S ribosomes in vitro. Probably functions indirectly by altering the affinity of the ribosome for aminoacyl-tRNA, thus increasing their reactivity as acceptors for peptidyl transferase. The chain is Elongation factor P from Oleidesulfovibrio alaskensis (strain ATCC BAA-1058 / DSM 17464 / G20) (Desulfovibrio alaskensis).